A 24-amino-acid chain; its full sequence is REVCELNPDCDELADHIGFQEAYR.

The Gla domain occupies 1-24 (REVCELNPDCDELADHIGFQEAYR). Residues glutamate 2, glutamate 5, and aspartate 11 each coordinate Ca(2+). A 4-carboxyglutamate mark is found at glutamate 2 and glutamate 5. The cysteines at positions 4 and 10 are disulfide-linked.

The protein belongs to the osteocalcin/matrix Gla protein family. In terms of processing, gamma-carboxyglutamate residues are formed by vitamin K dependent carboxylation by GGCX. These residues are essential for the binding of calcium. Decarboxylation promotes the hormone activity.

It is found in the secreted. In terms of biological role, the carboxylated form is one of the main organic components of the bone matrix, which constitutes 1-2% of the total bone protein: it acts as a negative regulator of bone formation and is required to limit bone formation without impairing bone resorption or mineralization. The carboxylated form binds strongly to apatite and calcium. The uncarboxylated form acts as a hormone secreted by osteoblasts, which regulates different cellular processes, such as energy metabolism, male fertility and brain development. Regulates of energy metabolism by acting as a hormone favoring pancreatic beta-cell proliferation, insulin secretion and sensitivity and energy expenditure. Uncarboxylated osteocalcin hormone also promotes testosterone production in the testes: acts as a ligand for G protein-coupled receptor GPRC6A at the surface of Leydig cells, initiating a signaling response that promotes the expression of enzymes required for testosterone synthesis in a CREB-dependent manner. Also acts as a regulator of brain development: osteocalcin hormone crosses the blood-brain barrier and acts as a ligand for GPR158 on neurons, initiating a signaling response that prevents neuronal apoptosis in the hippocampus, favors the synthesis of all monoamine neurotransmitters and inhibits that of gamma-aminobutyric acid (GABA). Osteocalcin also crosses the placenta during pregnancy and maternal osteocalcin is required for fetal brain development. The chain is Osteocalcin from Homo sapiens neanderthalensis (Neanderthal).